A 572-amino-acid polypeptide reads, in one-letter code: Proline--tRNA ligase (572 aa).

The protein belongs to the class-II aminoacyl-tRNA synthetase family. ProS type 1 subfamily. In terms of assembly, homodimer.

Its subcellular location is the cytoplasm. The enzyme catalyses tRNA(Pro) + L-proline + ATP = L-prolyl-tRNA(Pro) + AMP + diphosphate. Catalyzes the attachment of proline to tRNA(Pro) in a two-step reaction: proline is first activated by ATP to form Pro-AMP and then transferred to the acceptor end of tRNA(Pro). As ProRS can inadvertently accommodate and process non-cognate amino acids such as alanine and cysteine, to avoid such errors it has two additional distinct editing activities against alanine. One activity is designated as 'pretransfer' editing and involves the tRNA(Pro)-independent hydrolysis of activated Ala-AMP. The other activity is designated 'posttransfer' editing and involves deacylation of mischarged Ala-tRNA(Pro). The misacylated Cys-tRNA(Pro) is not edited by ProRS. The polypeptide is Proline--tRNA ligase (Klebsiella pneumoniae (strain 342)).